Reading from the N-terminus, the 391-residue chain is ATP phosphoribosyltransferase regulatory subunit (391 aa).

This sequence belongs to the class-II aminoacyl-tRNA synthetase family. HisZ subfamily. In terms of assembly, heteromultimer composed of HisG and HisZ subunits.

Its subcellular location is the cytoplasm. It participates in amino-acid biosynthesis; L-histidine biosynthesis; L-histidine from 5-phospho-alpha-D-ribose 1-diphosphate: step 1/9. Required for the first step of histidine biosynthesis. May allow the feedback regulation of ATP phosphoribosyltransferase activity by histidine. In Nitrosomonas europaea (strain ATCC 19718 / CIP 103999 / KCTC 2705 / NBRC 14298), this protein is ATP phosphoribosyltransferase regulatory subunit.